The primary structure comprises 691 residues: DNA ligase (691 aa).

NAD(+) contacts are provided by residues 41 to 45, 90 to 91, and Glu130; these read DAEYD and SL. The active-site N6-AMP-lysine intermediate is Lys132. Arg153, Glu190, Lys307, and Lys331 together coordinate NAD(+). Residues Cys425, Cys428, Cys443, and Cys449 each contribute to the Zn(2+) site. Residues 610 to 691 form the BRCT domain; it reads APQGVLAGKT…LHQLLEGNTR (82 aa).

The protein belongs to the NAD-dependent DNA ligase family. LigA subfamily. The cofactor is Mg(2+). It depends on Mn(2+) as a cofactor.

The catalysed reaction is NAD(+) + (deoxyribonucleotide)n-3'-hydroxyl + 5'-phospho-(deoxyribonucleotide)m = (deoxyribonucleotide)n+m + AMP + beta-nicotinamide D-nucleotide.. Its function is as follows. DNA ligase that catalyzes the formation of phosphodiester linkages between 5'-phosphoryl and 3'-hydroxyl groups in double-stranded DNA using NAD as a coenzyme and as the energy source for the reaction. It is essential for DNA replication and repair of damaged DNA. The protein is DNA ligase of Burkholderia multivorans (strain ATCC 17616 / 249).